The primary structure comprises 562 residues: Arginine--tRNA ligase (562 aa).

The 'HIGH' region motif lies at 121 to 131; sequence PNIAKPFSVGH.

It belongs to the class-I aminoacyl-tRNA synthetase family. In terms of assembly, monomer.

The protein resides in the cytoplasm. The catalysed reaction is tRNA(Arg) + L-arginine + ATP = L-arginyl-tRNA(Arg) + AMP + diphosphate. The sequence is that of Arginine--tRNA ligase from Streptococcus uberis (strain ATCC BAA-854 / 0140J).